Here is a 139-residue protein sequence, read N- to C-terminus: Transcription antitermination protein NusB (139 aa).

Belongs to the NusB family.

Involved in transcription antitermination. Required for transcription of ribosomal RNA (rRNA) genes. Binds specifically to the boxA antiterminator sequence of the ribosomal RNA (rrn) operons. This is Transcription antitermination protein NusB from Pectobacterium carotovorum subsp. carotovorum (strain PC1).